Here is a 47-residue protein sequence, read N- to C-terminus: PhoP/PhoQ regulator MgrB (47 aa).

The chain crosses the membrane as a helical span at residues 6-26 (WVALVVVVLACLLLWAQVFNM).

Belongs to the MgrB family. As to quaternary structure, may form homooligomers. Probably interacts with the periplasmic domain of PhoQ.

The protein resides in the cell inner membrane. PhoP-regulated transcription is redox-sensitive, being activated when the periplasm becomes more reducing. MgrB acts between DsbA/DsbB and PhoP/PhoQ in this pathway. Represses PhoP/PhoQ signaling, possibly by binding to the periplasmic domain of PhoQ, altering its activity and that of downstream effector PhoP. The chain is PhoP/PhoQ regulator MgrB from Escherichia coli O1:K1 / APEC.